Reading from the N-terminus, the 262-residue chain is Urease accessory protein UreD (262 aa).

It belongs to the UreD family. UreD, UreF and UreG form a complex that acts as a GTP-hydrolysis-dependent molecular chaperone, activating the urease apoprotein by helping to assemble the nickel containing metallocenter of UreC. The UreE protein probably delivers the nickel.

The protein resides in the cytoplasm. Functionally, required for maturation of urease via the functional incorporation of the urease nickel metallocenter. The chain is Urease accessory protein UreD from Acetivibrio thermocellus (strain ATCC 27405 / DSM 1237 / JCM 9322 / NBRC 103400 / NCIMB 10682 / NRRL B-4536 / VPI 7372) (Clostridium thermocellum).